Reading from the N-terminus, the 461-residue chain is Armadillo repeat-containing X-linked protein 1 (461 aa).

At 1–6 the chain is on the mitochondrial intermembrane side; it reads MGRTRE. 2 mitochondrion outer membrane (MOM)-targeting sequence regions span residues 1–6 and 26–36; these read MGRTRE and RLTWGKDENEK. Residues 7 to 29 form a helical; Signal-anchor membrane-spanning segment; that stretch reads AGCVAAGMVIGAGACYCVYRLTW. At 30–461 the chain is on the cytoplasmic side; it reads GKDENEKLWD…VKVLKVLTKL (432 aa). Disordered regions lie at residues 34-110 and 148-192; these read NEKL…HSEG and SSLP…PATA. Acidic residues predominate over residues 38–51; it reads WDDEDEEEEEEEES. A compositionally biased stretch (basic and acidic residues) spans 96 to 110; sequence PDVKKEVYPESHSEG. Basic residues predominate over residues 167 to 185; that stretch reads SRARNRTSGKVKRKNRSKS. ARM repeat units follow at residues 203 to 243, 245 to 284, 366 to 406, and 423 to 461; these read PYKI…NNAA, SFNQ…NLSV, PAMT…NIND, and SSLF…LTKL.

It belongs to the eutherian X-chromosome-specific Armcx family. As to quaternary structure, interacts with MIRO1.

It localises to the mitochondrion. The protein resides in the mitochondrion outer membrane. In terms of biological role, regulates mitochondrial transport during axon regeneration. Increases the proportion of motile mitochondria by recruiting stationary mitochondria into the motile pool. Enhances mitochondria movement and neurite growth in both adult axons and embryonic neurons. Promotes neuronal survival and axon regeneration after nerve injury. May link mitochondria to the Trak1-kinesin motor complex via its interaction with MIRO1. In Rattus norvegicus (Rat), this protein is Armadillo repeat-containing X-linked protein 1 (Armcx1).